The primary structure comprises 288 residues: Sulfhydrogenase 2 subunit gamma (288 aa).

Residues Y4–M103 enclose the FAD-binding FR-type domain. [2Fe-2S] cluster-binding residues include C250, C255, C258, and C270.

Dimer of heterotetramer of alpha, beta, gamma and delta subunits. The nickel-containing alpha and delta subunits constitute the hydrogenase activity. The beta and gamma subunits (flavin-containing dimer) constitute the sulfur reductase activity. The cofactor is FAD. It depends on [2Fe-2S] cluster as a cofactor.

It localises to the cytoplasm. It catalyses the reaction n sulfur + H2 = (n-1) sulfur + hydrogen sulfide + H(+). Part of a bifunctional enzyme complex that functions as a hydrogen-evolving hydrogenase with sulfur-reducing activity. May play a role in hydrogen cycling during fermentative growth. Activity exhibited with NAD in addition to NADPH. The beta and gamma subunits form the sulfur-reducing component that catalyzes the cytoplasmic production of hydrogen sulfide in the presence of elemental sulfur. The sequence is that of Sulfhydrogenase 2 subunit gamma from Pyrococcus furiosus (strain ATCC 43587 / DSM 3638 / JCM 8422 / Vc1).